A 275-amino-acid chain; its full sequence is MLTLNVIKAIILGIVEGFTEWLPISSTGHLVLVGSVLKMGESKAFMDMFNYVIQFGAILAVVVLYFHKLNPFSPQKNQLEQKQTWTLWFKVILAVIPSVIIGFPLNDWMDEHLMQNWVVASMLILYGILFIVIENRNKQRTPKFADLNTLPWLTAFWIGCFQALSIIPGTSRSGATILGAILIGTSRFVGAEFSFFMAIPTMIGVSILKIGKFFYQGNTFTGDQSIILLVGMVVSFIISIISIKFLMGYIKKNDFKVFGWYRIILGVLVLGAMFL.

8 consecutive transmembrane segments (helical) span residues 4–24, 44–64, 85–105, 113–133, 149–169, 188–208, 226–246, and 255–275; these read LNVI…WLPI, AFMD…VVVL, WTLW…GFPL, LMQN…FIVI, TLPW…IIPG, FVGA…VSIL, IILL…IKFL, and FKVF…AMFL.

This sequence belongs to the UppP family.

The protein resides in the cell membrane. It catalyses the reaction di-trans,octa-cis-undecaprenyl diphosphate + H2O = di-trans,octa-cis-undecaprenyl phosphate + phosphate + H(+). Catalyzes the dephosphorylation of undecaprenyl diphosphate (UPP). Confers resistance to bacitracin. The polypeptide is Undecaprenyl-diphosphatase (Latilactobacillus sakei subsp. sakei (strain 23K) (Lactobacillus sakei subsp. sakei)).